A 232-amino-acid polypeptide reads, in one-letter code: Orotate phosphoribosyltransferase (232 aa).

Residues R107, K108, K111, H113, and 133–141 each bind 5-phospho-alpha-D-ribose 1-diphosphate; that span reads EDLTTAGGS. Orotate is bound at residue T137.

Belongs to the purine/pyrimidine phosphoribosyltransferase family. PyrE subfamily. In terms of assembly, homodimer. Mg(2+) is required as a cofactor.

The catalysed reaction is orotidine 5'-phosphate + diphosphate = orotate + 5-phospho-alpha-D-ribose 1-diphosphate. It functions in the pathway pyrimidine metabolism; UMP biosynthesis via de novo pathway; UMP from orotate: step 1/2. Catalyzes the transfer of a ribosyl phosphate group from 5-phosphoribose 1-diphosphate to orotate, leading to the formation of orotidine monophosphate (OMP). In Sinorhizobium fredii (strain NBRC 101917 / NGR234), this protein is Orotate phosphoribosyltransferase.